The primary structure comprises 255 residues: Pyridoxine 5'-phosphate synthase (255 aa).

3-amino-2-oxopropyl phosphate-binding residues include Asn-8 and Arg-19. Residue His-44 is the Proton acceptor of the active site. Residues Arg-46 and His-51 each coordinate 1-deoxy-D-xylulose 5-phosphate. Glu-74 (proton acceptor) is an active-site residue. Thr-111 is a binding site for 1-deoxy-D-xylulose 5-phosphate. Residue His-202 is the Proton donor of the active site. Residues Asp-203 and 225 to 226 (GH) each bind 3-amino-2-oxopropyl phosphate.

Belongs to the PNP synthase family. As to quaternary structure, homooctamer; tetramer of dimers.

It localises to the cytoplasm. It carries out the reaction 3-amino-2-oxopropyl phosphate + 1-deoxy-D-xylulose 5-phosphate = pyridoxine 5'-phosphate + phosphate + 2 H2O + H(+). It functions in the pathway cofactor biosynthesis; pyridoxine 5'-phosphate biosynthesis; pyridoxine 5'-phosphate from D-erythrose 4-phosphate: step 5/5. Functionally, catalyzes the complicated ring closure reaction between the two acyclic compounds 1-deoxy-D-xylulose-5-phosphate (DXP) and 3-amino-2-oxopropyl phosphate (1-amino-acetone-3-phosphate or AAP) to form pyridoxine 5'-phosphate (PNP) and inorganic phosphate. This is Pyridoxine 5'-phosphate synthase from Xanthomonas oryzae pv. oryzae (strain MAFF 311018).